We begin with the raw amino-acid sequence, 498 residues long: Glycerol kinase (498 aa).

Threonine 12 is an ADP binding site. The ATP site is built by threonine 12, threonine 13, and serine 14. Threonine 12 provides a ligand contact to sn-glycerol 3-phosphate. Arginine 16 is a binding site for ADP. 4 residues coordinate sn-glycerol 3-phosphate: arginine 82, glutamate 83, tyrosine 134, and aspartate 243. Positions 82, 83, 134, 243, and 244 each coordinate glycerol. Residues threonine 265 and glycine 308 each contribute to the ADP site. Positions 265, 308, 312, and 409 each coordinate ATP. 2 residues coordinate ADP: glycine 409 and asparagine 413.

Belongs to the FGGY kinase family. As to quaternary structure, homotetramer and homodimer (in equilibrium).

The enzyme catalyses glycerol + ATP = sn-glycerol 3-phosphate + ADP + H(+). Its pathway is polyol metabolism; glycerol degradation via glycerol kinase pathway; sn-glycerol 3-phosphate from glycerol: step 1/1. Activated by phosphorylation and inhibited by fructose 1,6-bisphosphate (FBP). Its function is as follows. Key enzyme in the regulation of glycerol uptake and metabolism. Catalyzes the phosphorylation of glycerol to yield sn-glycerol 3-phosphate. This Clostridium botulinum (strain ATCC 19397 / Type A) protein is Glycerol kinase.